The sequence spans 201 residues: ATP-dependent Clp protease proteolytic subunit (201 aa).

The active-site Nucleophile is the S98. H123 is an active-site residue.

This sequence belongs to the peptidase S14 family. Fourteen ClpP subunits assemble into 2 heptameric rings which stack back to back to give a disk-like structure with a central cavity, resembling the structure of eukaryotic proteasomes.

The protein localises to the cytoplasm. The enzyme catalyses Hydrolysis of proteins to small peptides in the presence of ATP and magnesium. alpha-casein is the usual test substrate. In the absence of ATP, only oligopeptides shorter than five residues are hydrolyzed (such as succinyl-Leu-Tyr-|-NHMec, and Leu-Tyr-Leu-|-Tyr-Trp, in which cleavage of the -Tyr-|-Leu- and -Tyr-|-Trp bonds also occurs).. Functionally, cleaves peptides in various proteins in a process that requires ATP hydrolysis. Has a chymotrypsin-like activity. Plays a major role in the degradation of misfolded proteins. The sequence is that of ATP-dependent Clp protease proteolytic subunit from Neorickettsia sennetsu (strain ATCC VR-367 / Miyayama) (Ehrlichia sennetsu).